The following is a 320-amino-acid chain: Cell division protein FtsQ (320 aa).

The disordered stretch occupies residues 1-24 (MAQTIKRGGKGVRRATAARSAQRK). At 1–52 (MAQTIKRGGKGVRRATAARSAQRKVQTARQQTGSVLDSVLRWLPFSEETLHR) the chain is on the cytoplasmic side. Residues 53–73 (ILMTLILAAAAGLVWTVAVMA) traverse the membrane as a helical segment. At 74-320 (GIPALVSEQA…RAASAKSDEG (247 aa)) the chain is on the periplasmic side. The POTRA domain maps to 92–160 (FKVSHLEVRG…DTLVIDIVER (69 aa)). Residues 296 to 320 (AAEKRAEEQARAEAKRAASAKSDEG) form a disordered region.

The protein belongs to the FtsQ/DivIB family. FtsQ subfamily.

It is found in the cell inner membrane. In terms of biological role, essential cell division protein. This Novosphingobium aromaticivorans (strain ATCC 700278 / DSM 12444 / CCUG 56034 / CIP 105152 / NBRC 16084 / F199) protein is Cell division protein FtsQ.